Consider the following 584-residue polypeptide: DNA ligase (584 aa).

Position 249 (glutamate 249) interacts with ATP. Catalysis depends on lysine 251, which acts as the N6-AMP-lysine intermediate. The ATP site is built by arginine 256, arginine 271, glutamate 301, phenylalanine 341, arginine 416, and lysine 422.

The protein belongs to the ATP-dependent DNA ligase family. It depends on Mg(2+) as a cofactor.

It carries out the reaction ATP + (deoxyribonucleotide)n-3'-hydroxyl + 5'-phospho-(deoxyribonucleotide)m = (deoxyribonucleotide)n+m + AMP + diphosphate.. Its function is as follows. DNA ligase that seals nicks in double-stranded DNA during DNA replication, DNA recombination and DNA repair. The polypeptide is DNA ligase (Pyrobaculum neutrophilum (strain DSM 2338 / JCM 9278 / NBRC 100436 / V24Sta) (Thermoproteus neutrophilus)).